The primary structure comprises 1028 residues: Pro-apoptotic serine protease nma111 (1028 aa).

Positions 1-45 (MDMSGESSIKRRRSSIAASAERPAKHLRPENSTLTPGDATPANGT) are disordered. A serine protease region spans residues 82–266 (VVSIHFCQTC…AATDYFLPLD (185 aa)). Residues His-120, Asp-151, and Ser-233 each act as charge relay system in the active site. PDZ domains lie at 289-374 (QWIL…LLVQ) and 876-957 (VFCG…VTFD).

It belongs to the peptidase S1C family.

It is found in the nucleus. Its function is as follows. Nuclear serine protease which mediates apoptosis. The protein is Pro-apoptotic serine protease nma111 (nma111) of Aspergillus clavatus (strain ATCC 1007 / CBS 513.65 / DSM 816 / NCTC 3887 / NRRL 1 / QM 1276 / 107).